The sequence spans 1114 residues: Proto-oncogene tyrosine-protein kinase receptor Ret (1114 aa).

Positions 1–28 are cleaved as a signal peptide; sequence MAKATSGAAGLRLLLLLLLPLLGKVALG. Residues 29-153 form a cadherin-like region 1 (CLD1) region; it reads LYFSRDAYWE…RVYFSFFNTS (125 aa). At 29–635 the chain is on the extracellular side; the sequence is LYFSRDAYWE…QDPLCDELCR (607 aa). A glycan (N-linked (GlcNAc...) asparagine) is linked at Asn98. Cysteines 137 and 142 form a disulfide. Asn151 carries N-linked (GlcNAc...) asparagine glycosylation. Intrachain disulfides connect Cys157/Cys197 and Cys166/Cys243. The 105-residue stretch at 168 to 272 folds into the Cadherin domain; it reads PETRPSFRIR…YDEDDSAPTF (105 aa). Glu178 and Asn179 together coordinate Ca(2+). N-linked (GlcNAc...) asparagine glycosylation is present at Asn199. Residues Asp230, Glu232, Asp264, Glu265, Asp266, Asp267, Ser268, Asp300, and Asp302 each contribute to the Ca(2+) site. Residues 265–379 are cadherin-like region 3 (CLD3); it reads EDDSAPTFPA…MQLAVLVNDS (115 aa). N-linked (GlcNAc...) asparagine glycans are attached at residues Asn336, Asn343, Asn361, Asn367, and Asn377. Asp378 contributes to the Ca(2+) binding site. N-linked (GlcNAc...) asparagine glycosylation is present at Asn394. The cadherin-like region 4 (CLD4) stretch occupies residues 405–506; the sequence is PSTYSLSVSR…QAQLLVTVEG (102 aa). A disulfide bridge links Cys426 with Cys430. Asn448 and Asn468 each carry an N-linked (GlcNAc...) asparagine glycan. 4 disulfide bridges follow: Cys449–Cys478, Cys515–Cys531, Cys519–Cys541, and Cys528–Cys558. Asn554 carries an N-linked (GlcNAc...) asparagine glycan. Positions 564, 565, 567, 569, 574, and 584 each coordinate Ca(2+). 5 disulfides stabilise this stretch: Cys565–Cys581, Cys570–Cys585, Cys609–Cys620, Cys611–Cys618, and Cys630–Cys634. Residues 636–657 traverse the membrane as a helical segment; the sequence is TVIAAAVLFSFIVSVLLSAFCI. Over 658-1114 the chain is Cytoplasmic; the sequence is HCYHKFAHKP…AAKLMDTFDS (457 aa). Tyr687 is subject to Phosphotyrosine; by autocatalysis. The O-linked (GlcNAc) serine glycan is linked to Ser688. Residue Ser696 is modified to Phosphoserine. The Protein kinase domain occupies 724-1016; sequence LVLGKTLGEG…KMMVKRRDYL (293 aa). ATP is bound by residues 730-738 and Lys758; that span reads LGEGEFGKV. 805–807 contacts semaxanib; that stretch reads EYA. Phosphotyrosine; by autocatalysis is present on residues Tyr806, Tyr809, and Tyr826. Asp874 acts as the Proton acceptor in catalysis. Residues Tyr900, Tyr905, Tyr981, Tyr1015, Tyr1029, Tyr1062, Tyr1090, and Tyr1096 each carry the phosphotyrosine; by autocatalysis modification.

The protein belongs to the protein kinase superfamily. Tyr protein kinase family. As to quaternary structure, phosphorylated form interacts with the PBT domain of DOK2, DOK4 and DOK5. The phosphorylated form interacts with PLCG1 and GRB7. Interacts (not phosphorylated) with PTK2/FAK1 (via FERM domain). Extracellular cell-membrane anchored RET cadherin fragments form complex in neurons with reduced trophic status, preferentially at the contact sites between somas. Interacts with AIP in the pituitary gland; this interaction prevents the formation of the AIP-survivin complex. Interacts (inactive) with CBLC and CD2AP; dissociates upon activation by GDNF which increases CBLC:CD2AP interaction. It depends on Ca(2+) as a cofactor. Post-translationally, autophosphorylated on C-terminal tyrosine residues upon ligand stimulation. Proteolytically cleaved by caspase-3. The soluble RET kinase fragment is able to induce cell death. The extracellular cell-membrane anchored RET cadherin fragment accelerates cell adhesion in sympathetic neurons.

Its subcellular location is the cell membrane. The protein resides in the endosome membrane. It carries out the reaction L-tyrosyl-[protein] + ATP = O-phospho-L-tyrosyl-[protein] + ADP + H(+). Its activity is regulated as follows. Repressed by 4-(3-hydroxyanilino)-quinolines derivatives, indolin-2-one-derivatives, 2-(alkylsulfanyl)-4-(3-thienyl) nicotinonitrile analogs, 3- and 4-substituted beta-carbolin-1-ones, vandetanib, motesanib, sorafenib (BAY 43-9006), cabozantinib (XL184), lenvatinib, sunitinib, nintedanib, and withaferin A (WA). Inactivation by sorafenib both reduces kinase activity and promotes lysosomal degradation. Receptor tyrosine-protein kinase involved in numerous cellular mechanisms including cell proliferation, neuronal navigation, cell migration, and cell differentiation in response to glia cell line-derived growth family factors (GDNF, NRTN, ARTN, PSPN and GDF15). In contrast to most receptor tyrosine kinases, RET requires not only its cognate ligands but also coreceptors, for activation. GDNF ligands (GDNF, NRTN, ARTN, PSPN and GDF15) first bind their corresponding GDNFR coreceptors (GFRA1, GFRA2, GFRA3, GFRA4 and GFRAL, respectively), triggering RET autophosphorylation and activation, leading to activation of downstream signaling pathways, including the MAPK- and AKT-signaling pathways. Acts as a dependence receptor via the GDNF-GFRA1 signaling: in the presence of the ligand GDNF in somatotrophs within pituitary, promotes survival and down regulates growth hormone (GH) production, but triggers apoptosis in absence of GDNF. Required for the molecular mechanisms orchestration during intestine organogenesis via the ARTN-GFRA3 signaling: involved in the development of enteric nervous system and renal organogenesis during embryonic life, and promotes the formation of Peyer's patch-like structures, a major component of the gut-associated lymphoid tissue. Mediates, through interaction with GDF15-receptor GFRAL, GDF15-induced cell-signaling in the brainstem which triggers an aversive response, characterized by nausea, vomiting, and/or loss of appetite in response to various stresses. Modulates cell adhesion via its cleavage by caspase in sympathetic neurons and mediates cell migration in an integrin (e.g. ITGB1 and ITGB3)-dependent manner. Also active in the absence of ligand, triggering apoptosis through a mechanism that requires receptor intracellular caspase cleavage. Triggers the differentiation of rapidly adapting (RA) mechanoreceptors. Involved in the development of the neural crest. Regulates nociceptor survival and size. Phosphorylates PTK2/FAK1. Its function is as follows. Isoform 1 in complex with GFRAL induces higher activation of MAPK-signaling pathway than isoform 2 in complex with GFRAL. The chain is Proto-oncogene tyrosine-protein kinase receptor Ret from Homo sapiens (Human).